We begin with the raw amino-acid sequence, 331 residues long: D/L-glyceraldehyde reductase (331 aa).

Residue Tyr-51 is the Proton donor of the active site. A substrate-binding site is contributed by His-114. 213 to 276 (SAFGNNTKGL…SVTKARIAEN (64 aa)) provides a ligand contact to NADP(+).

This sequence belongs to the aldo/keto reductase family.

It catalyses the reaction glycerol + NADP(+) = L-glyceraldehyde + NADPH + H(+). The catalysed reaction is glycerol + NADP(+) = D-glyceraldehyde + NADPH + H(+). It participates in carbohydrate acid metabolism. Its function is as follows. Mediates the conversion of L-glyceraldehyde to glycerol in D-galacturonate catabolic process. Also able to reduce D-glyceraldehyde. This is D/L-glyceraldehyde reductase (gld1) from Hypocrea jecorina (Trichoderma reesei).